The following is a 341-amino-acid chain: tRNA N6-adenosine threonylcarbamoyltransferase (341 aa).

His114 and His118 together coordinate Fe cation. Residues 136–140 (LVSGG), Asp169, Gly182, Asp186, and Asn278 contribute to the substrate site. Asp304 lines the Fe cation pocket.

The protein belongs to the KAE1 / TsaD family. The cofactor is Fe(2+).

It is found in the cytoplasm. The enzyme catalyses L-threonylcarbamoyladenylate + adenosine(37) in tRNA = N(6)-L-threonylcarbamoyladenosine(37) in tRNA + AMP + H(+). Its function is as follows. Required for the formation of a threonylcarbamoyl group on adenosine at position 37 (t(6)A37) in tRNAs that read codons beginning with adenine. Is involved in the transfer of the threonylcarbamoyl moiety of threonylcarbamoyl-AMP (TC-AMP) to the N6 group of A37, together with TsaE and TsaB. TsaD likely plays a direct catalytic role in this reaction. The chain is tRNA N6-adenosine threonylcarbamoyltransferase from Lactococcus lactis subsp. cremoris (strain SK11).